Consider the following 231-residue polypeptide: 2-C-methyl-D-erythritol 4-phosphate cytidylyltransferase (231 aa).

This sequence belongs to the IspD/TarI cytidylyltransferase family. IspD subfamily.

It catalyses the reaction 2-C-methyl-D-erythritol 4-phosphate + CTP + H(+) = 4-CDP-2-C-methyl-D-erythritol + diphosphate. It participates in isoprenoid biosynthesis; isopentenyl diphosphate biosynthesis via DXP pathway; isopentenyl diphosphate from 1-deoxy-D-xylulose 5-phosphate: step 2/6. Its function is as follows. Catalyzes the formation of 4-diphosphocytidyl-2-C-methyl-D-erythritol from CTP and 2-C-methyl-D-erythritol 4-phosphate (MEP). The chain is 2-C-methyl-D-erythritol 4-phosphate cytidylyltransferase from Clostridium novyi (strain NT).